Reading from the N-terminus, the 39-residue chain is Cygnin (39 aa).

Position 1 is a pyrrolidone carboxylic acid (glutamine 1). Disulfide bonds link cysteine 6-cysteine 33, cysteine 12-cysteine 28, and cysteine 16-cysteine 32.

Belongs to the transferrin family.

The polypeptide is Cygnin (Cygnus atratus (Black swan)).